The sequence spans 172 residues: uncharacterized protein (172 aa).

At 1 to 101 (MEHVSKRSIG…RYDINTRPLV (101 aa)) the chain is on the lumenal side. A helical transmembrane segment spans residues 102–122 (VVLAISIVFFGCLLVLKDIII). The Cytoplasmic portion of the chain corresponds to 123 to 145 (QSSENILSVSKWKIIGASFMGTP). Residues 146–164 (YTGLLTGLVGPLLSPFSAV) form a helical membrane-spanning segment. Topologically, residues 165 to 172 (SSWLSFIF) are lumenal.

It localises to the endoplasmic reticulum membrane. This is an uncharacterized protein from Saccharomyces cerevisiae (strain ATCC 204508 / S288c) (Baker's yeast).